A 209-amino-acid polypeptide reads, in one-letter code: Protein ASG7 (209 aa).

At 1–49 the chain is on the lumenal side; the sequence is MTTLASSIEHKTKHLAAPFENDENPWMKKYCCQCKSCKMSVPVQPWLPR. A helical membrane pass occupies residues 50–70; the sequence is FFVFGILCPVFWLVNLLAWWF. The Cytoplasmic segment spans residues 71–184; it reads LQYWQPHELE…LLRKTFRDWN (114 aa). Ser-121, Ser-123, and Ser-125 each carry phosphoserine. Position 153 is a phosphothreonine (Thr-153). The chain crosses the membrane as a helical span at residues 185–205; that stretch reads LRSLLGLLIDSILIIFVVLLC. The Lumenal portion of the chain corresponds to 206 to 209; it reads KKSR.

It localises to the endomembrane system. Required for receptor inhibition of inappropriately expressed a-factor receptor (STE3) in MAT a cells. Inhibits signaling by relocalizing the G protein beta-gamma (STE4-STE18) subunit to intracellular membranes. May also be a mechanism for the down-regulation of the mating pheromone response after the zygotic fusion event, promoting the transition of the new diploid cell to vegetative growth. The polypeptide is Protein ASG7 (ASG7) (Saccharomyces cerevisiae (strain ATCC 204508 / S288c) (Baker's yeast)).